The sequence spans 396 residues: Ribosomal RNA large subunit methyltransferase I (396 aa).

Residues Ser2–Arg81 enclose the PUA domain.

This sequence belongs to the methyltransferase superfamily. RlmI family.

Its subcellular location is the cytoplasm. The catalysed reaction is cytidine(1962) in 23S rRNA + S-adenosyl-L-methionine = 5-methylcytidine(1962) in 23S rRNA + S-adenosyl-L-homocysteine + H(+). Functionally, specifically methylates the cytosine at position 1962 (m5C1962) of 23S rRNA. The sequence is that of Ribosomal RNA large subunit methyltransferase I from Shigella flexneri.